We begin with the raw amino-acid sequence, 458 residues long: Bifunctional protein HldE (458 aa).

The interval 1 to 311 (MVNVLVVGDL…ENLKSKKSGF (311 aa)) is ribokinase. 189–192 (NKKE) provides a ligand contact to ATP. Residue Asp257 is part of the active site. A cytidylyltransferase region spans residues 333–458 (FTNGCFDILH…TTNIINKIKG (126 aa)).

It in the N-terminal section; belongs to the carbohydrate kinase PfkB family. This sequence in the C-terminal section; belongs to the cytidylyltransferase family. Homodimer.

The catalysed reaction is D-glycero-beta-D-manno-heptose 7-phosphate + ATP = D-glycero-beta-D-manno-heptose 1,7-bisphosphate + ADP + H(+). It carries out the reaction D-glycero-beta-D-manno-heptose 1-phosphate + ATP + H(+) = ADP-D-glycero-beta-D-manno-heptose + diphosphate. It functions in the pathway nucleotide-sugar biosynthesis; ADP-L-glycero-beta-D-manno-heptose biosynthesis; ADP-L-glycero-beta-D-manno-heptose from D-glycero-beta-D-manno-heptose 7-phosphate: step 1/4. It participates in nucleotide-sugar biosynthesis; ADP-L-glycero-beta-D-manno-heptose biosynthesis; ADP-L-glycero-beta-D-manno-heptose from D-glycero-beta-D-manno-heptose 7-phosphate: step 3/4. In terms of biological role, catalyzes the phosphorylation of D-glycero-D-manno-heptose 7-phosphate at the C-1 position to selectively form D-glycero-beta-D-manno-heptose-1,7-bisphosphate. Its function is as follows. Catalyzes the ADP transfer from ATP to D-glycero-beta-D-manno-heptose 1-phosphate, yielding ADP-D-glycero-beta-D-manno-heptose. In Campylobacter fetus subsp. fetus (strain 82-40), this protein is Bifunctional protein HldE.